The following is a 614-amino-acid chain: Sodium- and chloride-dependent betaine transporter (614 aa).

Topologically, residues 1–44 are cytoplasmic; that stretch reads MDRKVAVHEDGYPVVSWVPEEGEMMDQKGKDQVKDRGQWTNKME. The next 3 helical transmembrane spans lie at 45 to 65, 73 to 92, and 117 to 137; these read FVLS…FPYL, AFFI…VFFL, and GIGM…IIIL. Over 138 to 210 the chain is Extracellular; that stretch reads AWALFYLFSS…SGIHDLGSLR (73 aa). A disulfide bridge links Cys-157 with Cys-166. Asn-171 and Asn-183 each carry an N-linked (GlcNAc...) asparagine glycan. The next 9 helical transmembrane spans lie at 211 to 229, 238 to 255, 291 to 308, 320 to 341, 374 to 393, 423 to 441, 458 to 478, 499 to 518, and 538 to 556; these read WELA…FCIW, VVYF…ILLI, IFFS…LGSY, IALC…FSIL, MPLS…FLGL, VLIL…LLVT, GICL…VYGA, ISWL…FSLS, and IGWL…FIII. The Cytoplasmic segment spans residues 557–614; sequence TFLKTQGSFKKRLRRLITPDPSLPQPGRRPPQDGSSAQNCSSSPAKQELIAWEKETHL. The tract at residues 574-602 is disordered; the sequence is TPDPSLPQPGRRPPQDGSSAQNCSSSPAK. Positions 589-601 are enriched in polar residues; that stretch reads DGSSAQNCSSSPA.

Belongs to the sodium:neurotransmitter symporter (SNF) (TC 2.A.22) family. SLC6A12 subfamily. In terms of assembly, interacts with LIN7C. In terms of tissue distribution, predominantly expressed in the liver (sinusoidal hepatocyte plasma membranes), also present in the renal medulla, where it localizes to the basolateral membranes of collecting ducts (particularly at the papilla tip) and the thick ascending limbs of Henle (at protein level). Some expression is detected in the leptomeninges, but no expression is detected in brain parenchyma, brain blood vessels, ependymal cells, the renal cortex and the intestine.

It localises to the basolateral cell membrane. Its subcellular location is the cell membrane. The catalysed reaction is 4-aminobutanoate(out) + chloride(out) + 3 Na(+)(out) = 4-aminobutanoate(in) + chloride(in) + 3 Na(+)(in). It catalyses the reaction glycine betaine(out) + 2 chloride(out) + 3 Na(+)(out) = glycine betaine(in) + 2 chloride(in) + 3 Na(+)(in). Transporter that mediates cellular uptake of betaine and GABA in a sodium- and chloride-dependent process. May have a role in regulation of GABAergic transmission in the brain through the reuptake of GABA into presynaptic terminals, as well as in osmotic regulation. Probably also involved in renal and hepatic osmotic regulation. This Mus musculus (Mouse) protein is Sodium- and chloride-dependent betaine transporter (Slc6a12).